Here is a 492-residue protein sequence, read N- to C-terminus: MTFRGDTAVVVLAAGAGTRMRSDIPKVLHTLAGRSMLSHSLHAMAKLAPQHLVVVLGHCHERISPLVDELAESLGRTINVTLQDRPLGTGDAVRCGLSALPADYSGIVVVTAGDTPLLDAETLADLIETHSATSSAVTVLTTTLSDPHGYGRILRTQDNAVMAIVEQTDATPSQREIREVNAGVYAFEITALQSALSRLSSDNAQQELYLPDVIAILRRDGQTVSARHIDDSALVAGVNDRVQLAQLGAELNRRIVAAHQMAGVTVIDPATTWIDVDVAIGRDTVIQPGTQLLGHTQIGDRCEIGPDTTLTDVTVGDNASVVRTHGSSSSIGAAAAVGPFTFLRPGTVLGTGGKLGAFVETKNSTIGAGTKVPHLTYVGDADIGDDSNIGAGSVFVNYDGMTKNRATIGSHVRSGAGTRFVAPVNVGDGAYTGAGTVIRDDVPPGALAVSGGPQRNIEDWVQQKRPGTPSAEAARKASAEQSTPPPDADQTP.

Residues 1–241 are pyrophosphorylase; the sequence is MTFRGDTAVV…SALVAGVNDR (241 aa). UDP-N-acetyl-alpha-D-glucosamine-binding positions include 12 to 15, Lys-26, Gln-83, and 88 to 89; these read LAAG and GT. Asp-114 contributes to the Mg(2+) binding site. Positions 151, 166, 181, and 239 each coordinate UDP-N-acetyl-alpha-D-glucosamine. Asn-239 provides a ligand contact to Mg(2+). The linker stretch occupies residues 242-262; that stretch reads VQLAQLGAELNRRIVAAHQMA. Residues 263–492 form an N-acetyltransferase region; it reads GVTVIDPATT…TPPPDADQTP (230 aa). Positions 344 and 362 each coordinate UDP-N-acetyl-alpha-D-glucosamine. His-374 acts as the Proton acceptor in catalysis. 2 residues coordinate UDP-N-acetyl-alpha-D-glucosamine: Tyr-377 and Asn-388. Residues Ala-391, 397–398, and Ala-434 each bind acetyl-CoA; that span reads NY. The tract at residues 451–492 is disordered; that stretch reads GGPQRNIEDWVQQKRPGTPSAEAARKASAEQSTPPPDADQTP. Positions 483-492 are enriched in pro residues; the sequence is TPPPDADQTP.

This sequence in the N-terminal section; belongs to the N-acetylglucosamine-1-phosphate uridyltransferase family. The protein in the C-terminal section; belongs to the transferase hexapeptide repeat family. In terms of assembly, homotrimer. Mg(2+) serves as cofactor.

It localises to the cytoplasm. The catalysed reaction is alpha-D-glucosamine 1-phosphate + acetyl-CoA = N-acetyl-alpha-D-glucosamine 1-phosphate + CoA + H(+). It catalyses the reaction N-acetyl-alpha-D-glucosamine 1-phosphate + UTP + H(+) = UDP-N-acetyl-alpha-D-glucosamine + diphosphate. Its pathway is nucleotide-sugar biosynthesis; UDP-N-acetyl-alpha-D-glucosamine biosynthesis; N-acetyl-alpha-D-glucosamine 1-phosphate from alpha-D-glucosamine 6-phosphate (route II): step 2/2. The protein operates within nucleotide-sugar biosynthesis; UDP-N-acetyl-alpha-D-glucosamine biosynthesis; UDP-N-acetyl-alpha-D-glucosamine from N-acetyl-alpha-D-glucosamine 1-phosphate: step 1/1. It functions in the pathway bacterial outer membrane biogenesis; LPS lipid A biosynthesis. Its function is as follows. Catalyzes the last two sequential reactions in the de novo biosynthetic pathway for UDP-N-acetylglucosamine (UDP-GlcNAc). The C-terminal domain catalyzes the transfer of acetyl group from acetyl coenzyme A to glucosamine-1-phosphate (GlcN-1-P) to produce N-acetylglucosamine-1-phosphate (GlcNAc-1-P), which is converted into UDP-GlcNAc by the transfer of uridine 5-monophosphate (from uridine 5-triphosphate), a reaction catalyzed by the N-terminal domain. This is Bifunctional protein GlmU from Mycobacterium marinum (strain ATCC BAA-535 / M).